Consider the following 396-residue polypeptide: Acetylornithine aminotransferase 2 (396 aa).

Residues 102–103 (GA) and Phe134 each bind pyridoxal 5'-phosphate. N(2)-acetyl-L-ornithine is bound at residue Arg137. Pyridoxal 5'-phosphate is bound at residue 219–222 (DEVQ). Lys248 is modified (N6-(pyridoxal phosphate)lysine). Thr276 contributes to the pyridoxal 5'-phosphate binding site.

This sequence belongs to the class-III pyridoxal-phosphate-dependent aminotransferase family. ArgD subfamily. Homodimer. Pyridoxal 5'-phosphate is required as a cofactor.

Its subcellular location is the cytoplasm. The enzyme catalyses N(2)-acetyl-L-ornithine + 2-oxoglutarate = N-acetyl-L-glutamate 5-semialdehyde + L-glutamate. The protein operates within amino-acid biosynthesis; L-arginine biosynthesis; N(2)-acetyl-L-ornithine from L-glutamate: step 4/4. The sequence is that of Acetylornithine aminotransferase 2 from Bordetella bronchiseptica (strain ATCC BAA-588 / NCTC 13252 / RB50) (Alcaligenes bronchisepticus).